A 193-amino-acid polypeptide reads, in one-letter code: Ribosome hibernation promotion factor (193 aa).

It belongs to the HPF/YfiA ribosome-associated protein family. Long HPF subfamily. As to quaternary structure, interacts with 100S ribosomes.

Its subcellular location is the cytoplasm. Its function is as follows. Might modulate either transcription and/or translation. In terms of biological role, required for dimerization of active 70S ribosomes into 100S ribosomes in stationary phase; 100S ribosomes are translationally inactive and sometimes present during exponential growth. The sequence is that of Ribosome hibernation promotion factor from Picosynechococcus sp. (strain ATCC 27264 / PCC 7002 / PR-6) (Agmenellum quadruplicatum).